The following is a 1392-amino-acid chain: Ankyrin repeat domain-containing protein 30B (1392 aa).

The disordered stretch occupies residues 1–21 (MKRLLAAAGKGVRGPEPPNPF). 5 ANK repeats span residues 72–101 (KKRT…QLNV), 105–134 (EGRT…DLNY), 138–167 (YGNT…VIEV), 171–200 (ASLT…NANA), and 204–233 (SKCT…DVFA). 6 disordered regions span residues 265-292 (PKNP…ERTP), 558-587 (AQMF…VSQK), 636-656 (DRET…PTCG), 671-690 (RETL…PTCG), 830-877 (KEGA…SDSE), and 904-926 (GKIE…QNSV). 2 stretches are compositionally biased toward polar residues: residues 267–280 (NPQN…STGT) and 576–586 (DSESPCETVSQ). Basic and acidic residues predominate over residues 636–650 (DRETFKAESPDKDGL). Polar residues predominate over residues 830–840 (KEGATKTVTGQ). Basic and acidic residues-rich tracts occupy residues 864–874 (LGRKEDTKSTS) and 904–915 (GKIEESPEKPSH). Coiled-coil stretches lie at residues 960–1168 (RELK…KQDK) and 1270–1318 (ETQC…QQLV).

Expressed in brain, breast and testis.

In Homo sapiens (Human), this protein is Ankyrin repeat domain-containing protein 30B (ANKRD30B).